A 184-amino-acid chain; its full sequence is Late embryogenesis abundant protein (184 aa).

The tract at residues 49-184 (TGNIAEYPTE…KLPGHHNHHP (136 aa)) is disordered. Residues 60–86 (PPAGVAAGTGAAATTAAGVTTSETTTG) show a composition bias toward low complexity. Composition is skewed to basic and acidic residues over residues 87-98 (QEHHGSLGEHLR) and 122-138 (KDKIKDKLGGGKHKDEQ). Residues 139 to 159 (TPTTATTTGPTTTTTTTGAAA) are compositionally biased toward low complexity. The span at 160–177 (DQHHEKKGILEKIKEKLP) shows a compositional bias: basic and acidic residues.

This sequence belongs to the plant dehydrin family.

Its function is as follows. LEA protein are late embryogenesis abundant in higher plant seed embryos. There are two subsets of LEA proteins (5a, and 5b), the first ones are expressed when the cotyledon weight reach 80 mg and the second set are expressed above 100 mg. The function of those proteins is not known. This is Late embryogenesis abundant protein from Raphanus sativus (Radish).